Reading from the N-terminus, the 102-residue chain is NADH-quinone oxidoreductase subunit K 1 (102 aa).

3 helical membrane-spanning segments follow: residues 5–25 (LSHYLTVSAILFTLGVFGIFL), 31–51 (IVILMSVELILLAVNINMVAF), and 65–85 (LFILTVAAAEAAIGLAILVVF).

The protein belongs to the complex I subunit 4L family. As to quaternary structure, NDH-1 is composed of 14 different subunits. Subunits NuoA, H, J, K, L, M, N constitute the membrane sector of the complex.

The protein localises to the cell inner membrane. It carries out the reaction a quinone + NADH + 5 H(+)(in) = a quinol + NAD(+) + 4 H(+)(out). Its function is as follows. NDH-1 shuttles electrons from NADH, via FMN and iron-sulfur (Fe-S) centers, to quinones in the respiratory chain. The immediate electron acceptor for the enzyme in this species is believed to be ubiquinone. Couples the redox reaction to proton translocation (for every two electrons transferred, four hydrogen ions are translocated across the cytoplasmic membrane), and thus conserves the redox energy in a proton gradient. The polypeptide is NADH-quinone oxidoreductase subunit K 1 (Rhizobium etli (strain ATCC 51251 / DSM 11541 / JCM 21823 / NBRC 15573 / CFN 42)).